The following is an 83-amino-acid chain: Putative beta-neurotoxin RjAa10f (83 aa).

Residues 1-18 form the signal peptide; it reads MKILIFIIASFMLIGVWC. The LCN-type CS-alpha/beta domain occupies 19–82; it reads KEGYPMGRDG…VWDPNNNKCV (64 aa). Disulfide bonds link Cys-29–Cys-81, Cys-33–Cys-55, Cys-40–Cys-62, and Cys-44–Cys-64.

The protein belongs to the long (4 C-C) scorpion toxin superfamily. Sodium channel inhibitor family. Beta subfamily. In terms of tissue distribution, expressed by the venom gland.

It is found in the secreted. In terms of biological role, beta toxins bind voltage-independently at site-4 of sodium channels (Nav) and shift the voltage of activation toward more negative potentials thereby affecting sodium channel activation and promoting spontaneous and repetitive firing. This Rhopalurus junceus (Caribbean blue scorpion) protein is Putative beta-neurotoxin RjAa10f.